We begin with the raw amino-acid sequence, 267 residues long: MRQSKKLGQCFLKDKNFVKKAINRAEITNNDIVLEVGLGEGALTKELAKIAKKVYVIELDERLKPFADEITAEFENVEIIWSDALKVDLKNLGFNKIVANLPYQISSPITFKFLEEDFETAVLMYQYEFAKRMAGKPDTKEYSRLSVAVQYNADVEFICKVPPSAFSPKPDVNSAIVKLTKREPKYHVKDEEFFKKVLKAVFQHRNRTIKRALIDSSHEIEVDRDNLKGILEKIENEFDFTQRVFKTPPEKIGDLSNLLYDEIANLE.

S-adenosyl-L-methionine-binding residues include Leu12, Gly37, Glu58, Asp83, and Asn100.

This sequence belongs to the class I-like SAM-binding methyltransferase superfamily. rRNA adenine N(6)-methyltransferase family. RsmA subfamily.

Its subcellular location is the cytoplasm. Its function is as follows. Specifically dimethylates two adjacent adenosines in the loop of a conserved hairpin near the 3'-end of 16S rRNA in the 30S particle. May play a critical role in biogenesis of 30S subunits. In Methanococcus maripaludis (strain DSM 14266 / JCM 13030 / NBRC 101832 / S2 / LL), this protein is Probable ribosomal RNA small subunit methyltransferase A.